Reading from the N-terminus, the 90-residue chain is Putative defensin-like protein 64 (90 aa).

The N-terminal stretch at 1-23 (MWGRQIVLKIFFLVLSCVIVIET) is a signal peptide. 2 disulfides stabilise this stretch: C33–C56 and C42–C77.

This sequence belongs to the DEFL family.

It is found in the secreted. The sequence is that of Putative defensin-like protein 64 from Arabidopsis thaliana (Mouse-ear cress).